Here is a 406-residue protein sequence, read N- to C-terminus: uncharacterized protein (406 aa).

Polar residues predominate over residues 136–153; that stretch reads SQKNWGSEKNWNSPSQGP. Positions 136 to 157 are disordered; sequence SQKNWGSEKNWNSPSQGPASRE.

This is an uncharacterized protein from Rattus norvegicus (Rat).